We begin with the raw amino-acid sequence, 207 residues long: Large ribosomal subunit protein uL4 (207 aa).

Positions 49–78 are disordered; sequence HAVKNRSAVRGGGRKPWRQKGTGRARQGSI. The span at 60–71 shows a compositional bias: basic residues; that stretch reads GGRKPWRQKGTG.

This sequence belongs to the universal ribosomal protein uL4 family. Part of the 50S ribosomal subunit.

Its function is as follows. One of the primary rRNA binding proteins, this protein initially binds near the 5'-end of the 23S rRNA. It is important during the early stages of 50S assembly. It makes multiple contacts with different domains of the 23S rRNA in the assembled 50S subunit and ribosome. Functionally, forms part of the polypeptide exit tunnel. This Latilactobacillus sakei subsp. sakei (strain 23K) (Lactobacillus sakei subsp. sakei) protein is Large ribosomal subunit protein uL4.